The primary structure comprises 397 residues: Acid extracellular protease (397 aa).

A signal peptide spans 1–17 (MQFSLATLTTLLAFVAA). A Peptidase A1 domain is found at 61-378 (YQVQISLGGQ…DLERDEVSIA (318 aa)). The active site involves aspartate 77. The N-linked (GlcNAc...) asparagine glycan is linked to asparagine 88. Cysteine 93 and cysteine 100 are joined by a disulfide. Aspartate 264 is an active-site residue. A disulfide bond links cysteine 303 and cysteine 343. N-linked (GlcNAc...) asparagine glycosylation is found at asparagine 310 and asparagine 314.

Belongs to the peptidase A1 family.

It is found in the secreted. This Yarrowia lipolytica (strain CLIB 122 / E 150) (Yeast) protein is Acid extracellular protease (AXP1).